A 156-amino-acid chain; its full sequence is Ribosome maturation factor RimP (156 aa).

Belongs to the RimP family.

Its subcellular location is the cytoplasm. Its function is as follows. Required for maturation of 30S ribosomal subunits. The sequence is that of Ribosome maturation factor RimP from Halalkalibacterium halodurans (strain ATCC BAA-125 / DSM 18197 / FERM 7344 / JCM 9153 / C-125) (Bacillus halodurans).